A 363-amino-acid chain; its full sequence is Inositol-3-phosphate synthase (363 aa).

NAD(+) is bound by residues D68, A127, Y147, S190, D225, and K238.

It belongs to the myo-inositol 1-phosphate synthase family. As to quaternary structure, monomer. NAD(+) serves as cofactor.

The catalysed reaction is D-glucose 6-phosphate = 1D-myo-inositol 3-phosphate. It functions in the pathway polyol metabolism; myo-inositol biosynthesis; myo-inositol from D-glucose 6-phosphate: step 1/2. Functionally, key enzyme in myo-inositol biosynthesis pathway that catalyzes the conversion of glucose 6-phosphate to 1D-myo-inositol 3-phosphate in a NAD-dependent manner. Plays a key role in oxidative stress resistance as its product is the precursor of the protective antioxidant mycothiol (MSH or AcCys-GlcN-Ins). This chain is Inositol-3-phosphate synthase, found in Corynebacterium glutamicum (strain ATCC 13032 / DSM 20300 / JCM 1318 / BCRC 11384 / CCUG 27702 / LMG 3730 / NBRC 12168 / NCIMB 10025 / NRRL B-2784 / 534).